Reading from the N-terminus, the 188-residue chain is Elongation factor P (188 aa).

Belongs to the elongation factor P family.

The protein resides in the cytoplasm. Its pathway is protein biosynthesis; polypeptide chain elongation. Its function is as follows. Involved in peptide bond synthesis. Stimulates efficient translation and peptide-bond synthesis on native or reconstituted 70S ribosomes in vitro. Probably functions indirectly by altering the affinity of the ribosome for aminoacyl-tRNA, thus increasing their reactivity as acceptors for peptidyl transferase. The polypeptide is Elongation factor P (Acidiphilium cryptum (strain JF-5)).